The following is a 793-amino-acid chain: Netrin-B (793 aa).

Positions 1–22 (MVRATGTRMGLLLPIILALAIG) are cleaved as a signal peptide. The region spanning 39-303 (KPRKCLPSFV…NLQDNDSADA (265 aa)) is the Laminin N-terminal domain. N103, N125, and N298 each carry an N-linked (GlcNAc...) asparagine glycan. Residues 332-378 (SVVKRQGKHKGSAYEKHYQSKLAATTPPQQPPKVTPPGKVTPPSTAA) are disordered. Residues 367–378 (PPGKVTPPSTAA) are compositionally biased toward low complexity. 15 disulfides stabilise this stretch: C405-C414, C407-C461, C463-C472, C475-C495, C498-C507, C500-C525, C528-C537, C540-C558, C561-C573, C563-C580, C582-C591, C594-C608, C649-C738, C652-C740, and C665-C792. Laminin EGF-like domains follow at residues 405–497 (CKCN…ECKM), 498–560 (CQCN…VCKR), and 561–610 (CDCH…PCIK). The interval 420–446 (SGSGTALSDQDDGQDEDTPSAPSLANH) is disordered. Positions 428-437 (DQDDGQDEDT) are enriched in acidic residues. Residues 649–792 (CGKCKASPKK…KRFQRRARKC (144 aa)) form the NTR domain. A glycan (N-linked (GlcNAc...) asparagine) is linked at N746.

As to quaternary structure, binds to unc-5 and fra receptors. At 24 hr after puparium formation (APF), detected in the most anterior (oldest) L3, L4 and L5 lamina neurons (at protein level). At 48 hr APF, expressed in all L3, L4 and L5 neurons with slightly higher expression in the L3 neurons (at protein level). At the midline of developing CNS and in different subsets of neurons, muscles, and epidermal patches.

It localises to the secreted. It is found in the extracellular space. The protein resides in the extracellular matrix. The protein localises to the cytoplasm. Its subcellular location is the perinuclear region. Functionally, netrins control guidance of CNS commissural axons and peripheral motor axons. Its association with either fra or unc-5 receptors will lead to axon attraction or repulsion, respectively. While short-range repulsion requires both fra and unc-5 receptors, long-range repulsion only requires unc-5. This chain is Netrin-B (NetB), found in Drosophila melanogaster (Fruit fly).